The chain runs to 106 residues: Diptericin A (106 aa).

An N-terminal signal peptide occupies residues 1 to 19; that stretch reads MQFTIAVALLCCAIASTLA. A propeptide spans 20–23 (removed by a dipeptidylpeptidase); it reads YPMP.

It belongs to the attacin/sarcotoxin-2 family.

The protein localises to the secreted. Functionally, antimicrobial peptide required to resist Gram-negative bacterial infections, regulated by Dredd. The sequence is that of Diptericin A from Drosophila melanogaster (Fruit fly).